Here is a 233-residue protein sequence, read N- to C-terminus: ATP-dependent Clp protease proteolytic subunit 1 (233 aa).

The active-site Nucleophile is S116. H141 is an active-site residue.

The protein belongs to the peptidase S14 family. Fourteen ClpP subunits assemble into 2 heptameric rings which stack back to back to give a disk-like structure with a central cavity, resembling the structure of eukaryotic proteasomes.

The protein localises to the cytoplasm. It catalyses the reaction Hydrolysis of proteins to small peptides in the presence of ATP and magnesium. alpha-casein is the usual test substrate. In the absence of ATP, only oligopeptides shorter than five residues are hydrolyzed (such as succinyl-Leu-Tyr-|-NHMec, and Leu-Tyr-Leu-|-Tyr-Trp, in which cleavage of the -Tyr-|-Leu- and -Tyr-|-Trp bonds also occurs).. In terms of biological role, cleaves peptides in various proteins in a process that requires ATP hydrolysis. Has a chymotrypsin-like activity. Plays a major role in the degradation of misfolded proteins. This is ATP-dependent Clp protease proteolytic subunit 1 from Salinibacter ruber (strain DSM 13855 / M31).